Here is a 182-residue protein sequence, read N- to C-terminus: ATP synthase subunit delta (182 aa).

This sequence belongs to the ATPase delta chain family. As to quaternary structure, F-type ATPases have 2 components, F(1) - the catalytic core - and F(0) - the membrane proton channel. F(1) has five subunits: alpha(3), beta(3), gamma(1), delta(1), epsilon(1). F(0) has three main subunits: a(1), b(2) and c(10-14). The alpha and beta chains form an alternating ring which encloses part of the gamma chain. F(1) is attached to F(0) by a central stalk formed by the gamma and epsilon chains, while a peripheral stalk is formed by the delta and b chains.

Its subcellular location is the cell membrane. Its function is as follows. F(1)F(0) ATP synthase produces ATP from ADP in the presence of a proton or sodium gradient. F-type ATPases consist of two structural domains, F(1) containing the extramembraneous catalytic core and F(0) containing the membrane proton channel, linked together by a central stalk and a peripheral stalk. During catalysis, ATP synthesis in the catalytic domain of F(1) is coupled via a rotary mechanism of the central stalk subunits to proton translocation. This protein is part of the stalk that links CF(0) to CF(1). It either transmits conformational changes from CF(0) to CF(1) or is implicated in proton conduction. The protein is ATP synthase subunit delta of Alkalihalophilus pseudofirmus (strain ATCC BAA-2126 / JCM 17055 / OF4) (Bacillus pseudofirmus).